Reading from the N-terminus, the 324-residue chain is MSILHNIVSKKELKRRMFFETEPRLTLSFYKYFFIKNTQEYRDRLYKNFYKYNVLGRIYVASEGINAQISVPKKYYSILKKFLYNFDIELNNLRINKSLDNEKSFWVLCVKIKKKIVQDGIKEHFFNPNNVGIYIQSEQVNSMLNDKKTIFIDMRNSYEYAIGHFENAIEIKSITFREQLKKVIQLMAYAKNKKIVMYCTGGIRCEKATSWMLFNGFKHVYHLEGGIIGYVHDARKNGLPVLFKGKSFVFDNRMSEKISDEVISYCKQCGKSSDVYINCKYSSCHLLFIQCENCSVKFHSCCSLECMKKYNFYMLNNDLKKISY.

One can recognise a Rhodanese domain in the interval 145 to 239; it reads NDKKTIFIDM…YVHDARKNGL (95 aa). Cysteine 199 serves as the catalytic Cysteine persulfide intermediate.

This sequence belongs to the TrhO family.

It carries out the reaction uridine(34) in tRNA + AH2 + O2 = 5-hydroxyuridine(34) in tRNA + A + H2O. Catalyzes oxygen-dependent 5-hydroxyuridine (ho5U) modification at position 34 in tRNAs. The protein is tRNA uridine(34) hydroxylase of Buchnera aphidicola subsp. Acyrthosiphon pisum (strain Tuc7).